The chain runs to 324 residues: Glyoxylate/hydroxypyruvate reductase B (324 aa).

Catalysis depends on residues Arg-237 and Glu-266. His-285 serves as the catalytic Proton donor.

It belongs to the D-isomer specific 2-hydroxyacid dehydrogenase family. GhrB subfamily. Homodimer.

Its subcellular location is the cytoplasm. The catalysed reaction is glycolate + NADP(+) = glyoxylate + NADPH + H(+). The enzyme catalyses (R)-glycerate + NAD(+) = 3-hydroxypyruvate + NADH + H(+). It carries out the reaction (R)-glycerate + NADP(+) = 3-hydroxypyruvate + NADPH + H(+). Catalyzes the NADPH-dependent reduction of glyoxylate and hydroxypyruvate into glycolate and glycerate, respectively. The sequence is that of Glyoxylate/hydroxypyruvate reductase B from Salmonella dublin (strain CT_02021853).